The chain runs to 257 residues: Transcription factor MYB3 (257 aa).

HTH myb-type domains follow at residues 9-61 (KAHM…MNYL) and 62-116 (RPDL…KRKL). 2 DNA-binding regions (H-T-H motif) span residues 37-61 (WRSL…MNYL) and 89-112 (WSLI…NTHI). Positions 189–193 (LNLEL) match the Required for interaction with CPL1 motif.

In terms of assembly, interacts with CPL1. In terms of tissue distribution, expressed in roots, stems, leaves, flowers and siliques.

The protein resides in the nucleus. This is Transcription factor MYB3 (MYB3) from Arabidopsis thaliana (Mouse-ear cress).